Here is a 764-residue protein sequence, read N- to C-terminus: Probable cyclic nucleotide-gated ion channel 20, chloroplastic (764 aa).

Residues 1–25 (MASHNENDDIPMLPISDPSSRTRAR) constitute a chloroplast transit peptide. Residues 1–40 (MASHNENDDIPMLPISDPSSRTRARAFTSRSRSVSLSNPT) form a disordered region. Residues 19 to 33 (SSRTRARAFTSRSRS) show a composition bias toward low complexity. Topologically, residues 26–204 (AFTSRSRSVS…PHAKEVQTWT (179 aa)) are stromal. Residues 205 to 225 (KFFALSCLLAIFIDPLFFFLI) form a helical membrane-spanning segment. The Lumenal portion of the chain corresponds to 226–242 (KVQEQNKCIMIDWPMTK). The chain crosses the membrane as a helical span at residues 243 to 263 (AFVAVRSVTDVIFTMNILLQF). At 264 to 295 (RLAYVARESTVVGAGQLVSHPKKIALHYLKGK) the chain is on the stromal side. Residues 296 to 316 (FFLDLFIVMPLPQILILWIIP) traverse the membrane as a helical segment. At 317 to 329 (AHLGASGANYAKN) the chain is on the lumenal side. The chain crosses the membrane as a helical span at residues 330–350 (LLRAAVLFQYIPKLYRLLPFL). Residues 351-366 (AGQTPTGFIFESAWAN) lie on the Stromal side of the membrane. A helical transmembrane segment spans residues 367–387 (FVINLLTFMLAGHVVGSCWYL). Residues 388-488 (FGLQRVNQCL…GNQVPSYFLG (101 aa)) are Lumenal-facing. A helical membrane pass occupies residues 489 to 509 (EVFFTMGIIGLGLLLFALLIG). Over 510 to 764 (NMQNFLQALG…LCTPQSSYSL (255 aa)) the chain is Stromal. Residues 593–710 (IFSL…EDVT) and Glu-658 each bind a nucleoside 3',5'-cyclic phosphate. The interval 713–729 (FSRFLRSHRVQGAIRYD) is calmodulin-binding. One can recognise an IQ domain in the interval 734-763 (RLRAARQIQVAWRYRRRRLHRLCTPQSSYS).

The protein belongs to the cyclic nucleotide-gated cation channel (TC 1.A.1.5) family. As to quaternary structure, homotetramer or heterotetramer.

It is found in the plastid. The protein localises to the chloroplast thylakoid membrane. In terms of biological role, probable cyclic nucleotide-gated ion channel. The polypeptide is Probable cyclic nucleotide-gated ion channel 20, chloroplastic (CNGC20) (Arabidopsis thaliana (Mouse-ear cress)).